Consider the following 314-residue polypeptide: Vacuolar membrane protein FOSTERSB_4073 (314 aa).

The segment at K32–A60 is disordered. Residues V93–L113 traverse the membrane as a helical segment. S148, S254, and S274 each carry phosphoserine. Residues E240–N309 are disordered. Over residues S254–H269 the composition is skewed to basic and acidic residues.

Belongs to the PRM5 family.

The protein localises to the vacuole membrane. In Saccharomyces cerevisiae (strain FostersB) (Baker's yeast), this protein is Vacuolar membrane protein FOSTERSB_4073.